Here is a 274-residue protein sequence, read N- to C-terminus: Thiamine kinase (274 aa).

It belongs to the thiamine kinase family.

The enzyme catalyses thiamine + ATP = thiamine phosphate + ADP + H(+). Its pathway is cofactor biosynthesis; thiamine diphosphate biosynthesis; thiamine phosphate from thiamine: step 1/1. Its function is as follows. Catalyzes the ATP-dependent phosphorylation of thiamine to thiamine phosphate. Is involved in thiamine salvage. The polypeptide is Thiamine kinase (Escherichia coli O139:H28 (strain E24377A / ETEC)).